The following is a 305-amino-acid chain: Virulence plasmid integrase pGP7-D (305 aa).

The region spanning leucine 13 to tyrosine 99 is the Core-binding (CB) domain. The region spanning valine 127–threonine 303 is the Tyr recombinase domain. Residues lysine 188 and arginine 257 contribute to the active site. Tyrosine 289 serves as the catalytic O-(3'-phospho-DNA)-tyrosine intermediate.

The protein belongs to the 'phage' integrase family.

The chain is Virulence plasmid integrase pGP7-D from Chlamydia muridarum (strain MoPn / Nigg).